The chain runs to 590 residues: V-type ATP synthase alpha chain (590 aa).

Residue 231–238 (GPFGSGKT) participates in ATP binding.

The protein belongs to the ATPase alpha/beta chains family.

It catalyses the reaction ATP + H2O + 4 H(+)(in) = ADP + phosphate + 5 H(+)(out). In terms of biological role, produces ATP from ADP in the presence of a proton gradient across the membrane. The V-type alpha chain is a catalytic subunit. This Clostridium botulinum (strain Langeland / NCTC 10281 / Type F) protein is V-type ATP synthase alpha chain.